A 437-amino-acid chain; its full sequence is Probable peptidoglycan-N-acetylglucosamine deacetylase ARB_03699 (437 aa).

Positions 1–20 (MLMRLYTFFAAALLACCAAA) are cleaved as a signal peptide. The interval 47 to 132 (STRAATTTTT…STSAAAPSTP (86 aa)) is disordered. Residue Asn99 is glycosylated (N-linked (GlcNAc...) asparagine). Residues 149–334 (GTVAITFDDG…EVKRRGLKAV (186 aa)) form the NodB homology domain. Asp156 acts as the Proton acceptor in catalysis. Residues Asp157, His209, and His213 each contribute to the Zn(2+) site. A substrate-binding site is contributed by Tyr251. Catalysis depends on His308, which acts as the Proton donor. Residues 350-370 (TTPVQVPTGTSTTSPTATPTS) show a composition bias toward low complexity. The disordered stretch occupies residues 350 to 384 (TTPVQVPTGTSTTSPTATPTSPGTPPPAPTQPGVA). Residues 389–435 (KWHTVVSGDTCYDIAAANGISLDNLYKWNPAVGTSCASLWLGYAVCV) form the LysM domain.

It depends on Zn(2+) as a cofactor. Co(2+) serves as cofactor.

It is found in the secreted. It catalyses the reaction peptidoglycan-N-acetyl-D-glucosamine + H2O = peptidoglycan-D-glucosamine + acetate.. Its function is as follows. Catalyzes the deacetylation of N-acetylglucosamine (GlcNAc) residues in peptidoglycan. In Arthroderma benhamiae (strain ATCC MYA-4681 / CBS 112371) (Trichophyton mentagrophytes), this protein is Probable peptidoglycan-N-acetylglucosamine deacetylase ARB_03699.